The following is a 163-amino-acid chain: Crossover junction endodeoxyribonuclease RuvC (163 aa).

Active-site residues include Asp4, Glu65, and Asp138. Mg(2+) is bound by residues Asp4, Glu65, and Asp138.

It belongs to the RuvC family. In terms of assembly, homodimer which binds Holliday junction (HJ) DNA. The HJ becomes 2-fold symmetrical on binding to RuvC with unstacked arms; it has a different conformation from HJ DNA in complex with RuvA. In the full resolvosome a probable DNA-RuvA(4)-RuvB(12)-RuvC(2) complex forms which resolves the HJ. Mg(2+) is required as a cofactor.

Its subcellular location is the cytoplasm. The catalysed reaction is Endonucleolytic cleavage at a junction such as a reciprocal single-stranded crossover between two homologous DNA duplexes (Holliday junction).. The RuvA-RuvB-RuvC complex processes Holliday junction (HJ) DNA during genetic recombination and DNA repair. Endonuclease that resolves HJ intermediates. Cleaves cruciform DNA by making single-stranded nicks across the HJ at symmetrical positions within the homologous arms, yielding a 5'-phosphate and a 3'-hydroxyl group; requires a central core of homology in the junction. The consensus cleavage sequence is 5'-(A/T)TT(C/G)-3'. Cleavage occurs on the 3'-side of the TT dinucleotide at the point of strand exchange. HJ branch migration catalyzed by RuvA-RuvB allows RuvC to scan DNA until it finds its consensus sequence, where it cleaves and resolves the cruciform DNA. The sequence is that of Crossover junction endodeoxyribonuclease RuvC from Corynebacterium diphtheriae (strain ATCC 700971 / NCTC 13129 / Biotype gravis).